The primary structure comprises 187 residues: Peptidyl-tRNA hydrolase (187 aa).

Position 14 (Y14) interacts with tRNA. Residue H19 is the Proton acceptor of the active site. TRNA contacts are provided by Y60, N62, and N108.

Belongs to the PTH family. Monomer.

It is found in the cytoplasm. The enzyme catalyses an N-acyl-L-alpha-aminoacyl-tRNA + H2O = an N-acyl-L-amino acid + a tRNA + H(+). Its function is as follows. Hydrolyzes ribosome-free peptidyl-tRNAs (with 1 or more amino acids incorporated), which drop off the ribosome during protein synthesis, or as a result of ribosome stalling. Functionally, catalyzes the release of premature peptidyl moieties from peptidyl-tRNA molecules trapped in stalled 50S ribosomal subunits, and thus maintains levels of free tRNAs and 50S ribosomes. This Mycoplasmopsis synoviae (strain 53) (Mycoplasma synoviae) protein is Peptidyl-tRNA hydrolase.